The following is a 298-amino-acid chain: Inosose dehydratase (298 aa).

It belongs to the IolE/MocC family. Requires glutathione as cofactor. The cofactor is Co(2+). It depends on Mn(2+) as a cofactor.

The catalysed reaction is scyllo-inosose = 3D-3,5/4-trihydroxycyclohexane-1,2-dione + H2O. Its function is as follows. Catalyzes the dehydration of inosose (2-keto-myo-inositol, 2KMI or 2,4,6/3,5-pentahydroxycyclohexanone) to 3D-(3,5/4)-trihydroxycyclohexane-1,2-dione (D-2,3-diketo-4-deoxy-epi-inositol). In Erwinia tasmaniensis (strain DSM 17950 / CFBP 7177 / CIP 109463 / NCPPB 4357 / Et1/99), this protein is Inosose dehydratase.